We begin with the raw amino-acid sequence, 452 residues long: Poly(A) polymerase I (452 aa).

Residues Asp-68, Asp-70, and Asp-150 contribute to the active site. The tract at residues Glu-427–Glu-452 is disordered. A compositionally biased stretch (basic residues) spans Leu-431 to Glu-452.

This sequence belongs to the tRNA nucleotidyltransferase/poly(A) polymerase family.

It catalyses the reaction RNA(n) + ATP = RNA(n)-3'-adenine ribonucleotide + diphosphate. In terms of biological role, adds poly(A) tail to the 3' end of many RNAs, which usually targets these RNAs for decay. Plays a significant role in the global control of gene expression, through influencing the rate of transcript degradation, and in the general RNA quality control. This chain is Poly(A) polymerase I, found in Haemophilus influenzae (strain ATCC 51907 / DSM 11121 / KW20 / Rd).